Reading from the N-terminus, the 142-residue chain is Large ribosomal subunit protein uL13 (142 aa).

It belongs to the universal ribosomal protein uL13 family. In terms of assembly, part of the 50S ribosomal subunit.

Its function is as follows. This protein is one of the early assembly proteins of the 50S ribosomal subunit, although it is not seen to bind rRNA by itself. It is important during the early stages of 50S assembly. The protein is Large ribosomal subunit protein uL13 of Acholeplasma laidlawii (strain PG-8A).